The chain runs to 59 residues: Large ribosomal subunit protein uL30 (59 aa).

Belongs to the universal ribosomal protein uL30 family. Part of the 50S ribosomal subunit.

The sequence is that of Large ribosomal subunit protein uL30 from Geotalea uraniireducens (strain Rf4) (Geobacter uraniireducens).